The sequence spans 374 residues: Multicilin (374 aa).

2 disordered regions span residues 18–72 and 84–105; these read CPNR…ALPA and CSSF…QSHS. A coiled-coil region spans residues 168–216; the sequence is EQYWKEVADQNQRALGDALIENNQLHATLTQKQEEIASLKERNLQLKEL. Residues 284-306 form a disordered region; sequence LQSRDPKRLRLQPEPQSLDRRPG.

This sequence belongs to the geminin family. Heterodimer (via coiled-coil domain) with GMNN (via coiled-coil domain); targets GMNN to the nucleus. Can form homodimers (in vitro, via coiled-coil domain), but these are much less stable than the heterodimer formed with GMNN.

It is found in the nucleus. Its function is as follows. Transcription regulator specifically required for multiciliate cell differentiation. Acts in a multiprotein complex containing E2F4 and E2F5 that binds and activates genes required for centriole biogenesis. Required for the deuterosome-mediated acentriolar pathway. Plays a role in mitotic cell cycle progression by promoting cell cycle exit. Modulates GMNN activity by reducing its affinity for CDT1. The chain is Multicilin (MCIDAS) from Bos taurus (Bovine).